The following is a 129-amino-acid chain: MSAKTDEILESLKSLSLLEASELVKQIEEAFGVSAAASAGVVMAAPGAAGGGGEAAEEKTEFDVILEGFEASAKIKVLKAVREATGLGLGDAKALVEAAPKAFKEGVSKEDAEAAKKAIEEAGGKVTLK.

It belongs to the bacterial ribosomal protein bL12 family. Homodimer. Part of the ribosomal stalk of the 50S ribosomal subunit. Forms a multimeric L10(L12)X complex, where L10 forms an elongated spine to which 2 to 4 L12 dimers bind in a sequential fashion. Binds GTP-bound translation factors.

In terms of biological role, forms part of the ribosomal stalk which helps the ribosome interact with GTP-bound translation factors. Is thus essential for accurate translation. The chain is Large ribosomal subunit protein bL12 from Synechococcus sp. (strain CC9605).